We begin with the raw amino-acid sequence, 115 residues long: SOSS complex subunit C homolog (115 aa).

Belongs to the SOSS-C family.

The polypeptide is SOSS complex subunit C homolog (Drosophila grimshawi (Hawaiian fruit fly)).